A 235-amino-acid polypeptide reads, in one-letter code: Ubiquinone biosynthesis O-methyltransferase (235 aa).

S-adenosyl-L-methionine-binding residues include Arg39, Gly59, Asp80, and Met124.

Belongs to the methyltransferase superfamily. UbiG/COQ3 family.

It carries out the reaction a 3-demethylubiquinol + S-adenosyl-L-methionine = a ubiquinol + S-adenosyl-L-homocysteine + H(+). The catalysed reaction is a 3-(all-trans-polyprenyl)benzene-1,2-diol + S-adenosyl-L-methionine = a 2-methoxy-6-(all-trans-polyprenyl)phenol + S-adenosyl-L-homocysteine + H(+). It participates in cofactor biosynthesis; ubiquinone biosynthesis. O-methyltransferase that catalyzes the 2 O-methylation steps in the ubiquinone biosynthetic pathway. This Vibrio campbellii (strain ATCC BAA-1116) protein is Ubiquinone biosynthesis O-methyltransferase.